A 266-amino-acid chain; its full sequence is 4-hydroxy-tetrahydrodipicolinate reductase (266 aa).

NAD(+) contacts are provided by residues Gly8 to Met13 and Glu33. An NADP(+)-binding site is contributed by Arg34. NAD(+) contacts are provided by residues Gly97–Thr99 and Ala121–Met124. His154 functions as the Proton donor/acceptor in the catalytic mechanism. Residue His155 coordinates (S)-2,3,4,5-tetrahydrodipicolinate. Residue Lys158 is the Proton donor of the active site. (S)-2,3,4,5-tetrahydrodipicolinate is bound at residue Gly164 to Thr165.

Belongs to the DapB family.

Its subcellular location is the cytoplasm. It carries out the reaction (S)-2,3,4,5-tetrahydrodipicolinate + NAD(+) + H2O = (2S,4S)-4-hydroxy-2,3,4,5-tetrahydrodipicolinate + NADH + H(+). It catalyses the reaction (S)-2,3,4,5-tetrahydrodipicolinate + NADP(+) + H2O = (2S,4S)-4-hydroxy-2,3,4,5-tetrahydrodipicolinate + NADPH + H(+). It participates in amino-acid biosynthesis; L-lysine biosynthesis via DAP pathway; (S)-tetrahydrodipicolinate from L-aspartate: step 4/4. Its function is as follows. Catalyzes the conversion of 4-hydroxy-tetrahydrodipicolinate (HTPA) to tetrahydrodipicolinate. The chain is 4-hydroxy-tetrahydrodipicolinate reductase from Geobacter metallireducens (strain ATCC 53774 / DSM 7210 / GS-15).